Reading from the N-terminus, the 273-residue chain is Large ribosomal subunit protein uL2cz/uL2cy (273 aa).

2 disordered regions span residues 1-22 (MAKH…DRQV) and 225-273 (PVDH…RRRK).

It belongs to the universal ribosomal protein uL2 family. Part of the 50S ribosomal subunit.

Its subcellular location is the plastid. It localises to the chloroplast. In Zea mays (Maize), this protein is Large ribosomal subunit protein uL2cz/uL2cy (rpl2-A).